The sequence spans 185 residues: Peptide methionine sulfoxide reductase MsrA (185 aa).

Cysteine 12 is an active-site residue.

It belongs to the MsrA Met sulfoxide reductase family.

The enzyme catalyses L-methionyl-[protein] + [thioredoxin]-disulfide + H2O = L-methionyl-(S)-S-oxide-[protein] + [thioredoxin]-dithiol. It catalyses the reaction [thioredoxin]-disulfide + L-methionine + H2O = L-methionine (S)-S-oxide + [thioredoxin]-dithiol. In terms of biological role, has an important function as a repair enzyme for proteins that have been inactivated by oxidation. Catalyzes the reversible oxidation-reduction of methionine sulfoxide in proteins to methionine. This is Peptide methionine sulfoxide reductase MsrA from Granulibacter bethesdensis (strain ATCC BAA-1260 / CGDNIH1).